The chain runs to 594 residues: Type I restriction enzyme EcoEI specificity subunit (594 aa).

The protein belongs to the type-I restriction system S methylase family. In terms of assembly, the type I restriction/modification system is composed of three polypeptides R, M and S; the restriction enzyme has stoichiometry R(2)M(2)S(1) while the methyltransferase is M(2)S(1).

In terms of biological role, the specificity (S) subunit of a type I restriction enzyme; this subunit dictates DNA sequence specificity. The M and S subunits together form a methyltransferase (MTase) that methylates two adenine residues of the sequence 5'-GAGN(7)ATGC-3'. In the presence of the R subunit the complex can also act as an endonuclease, binding to the same target sequence but cutting the DNA some distance from this site. Whether the DNA is cut or modified depends on the methylation state of the target sequence. When the target site is unmodified, the DNA is cut. When the target site is hemimethylated, the complex acts as a maintenance MTase modifying the DNA so that both strands become methylated. After locating a non-methylated recognition site, the enzyme complex serves as a molecular motor that translocates DNA in an ATP-dependent manner until a collision occurs that triggers cleavage. In Escherichia coli, this protein is Type I restriction enzyme EcoEI specificity subunit.